The chain runs to 242 residues: Ribonuclease PH (242 aa).

Residues R89 and 127–129 contribute to the phosphate site; that span reads GTR.

It belongs to the RNase PH family. Homohexameric ring arranged as a trimer of dimers.

The catalysed reaction is tRNA(n+1) + phosphate = tRNA(n) + a ribonucleoside 5'-diphosphate. Phosphorolytic 3'-5' exoribonuclease that plays an important role in tRNA 3'-end maturation. Removes nucleotide residues following the 3'-CCA terminus of tRNAs; can also add nucleotides to the ends of RNA molecules by using nucleoside diphosphates as substrates, but this may not be physiologically important. Probably plays a role in initiation of 16S rRNA degradation (leading to ribosome degradation) during starvation. The sequence is that of Ribonuclease PH from Neisseria meningitidis serogroup B (strain ATCC BAA-335 / MC58).